Consider the following 1388-residue polypeptide: DNA-directed RNA polymerase subunit beta (1388 aa).

This sequence belongs to the RNA polymerase beta chain family. The RNAP catalytic core consists of 2 alpha, 1 beta, 1 beta' and 1 omega subunit. When a sigma factor is associated with the core the holoenzyme is formed, which can initiate transcription.

The enzyme catalyses RNA(n) + a ribonucleoside 5'-triphosphate = RNA(n+1) + diphosphate. In terms of biological role, DNA-dependent RNA polymerase catalyzes the transcription of DNA into RNA using the four ribonucleoside triphosphates as substrates. This Xylella fastidiosa (strain Temecula1 / ATCC 700964) protein is DNA-directed RNA polymerase subunit beta.